A 561-amino-acid chain; its full sequence is Arginine--tRNA ligase (561 aa).

Positions 128-138 match the 'HIGH' region motif; that stretch reads ANPTGPLHVGH.

The protein belongs to the class-I aminoacyl-tRNA synthetase family. As to quaternary structure, monomer.

Its subcellular location is the cytoplasm. It carries out the reaction tRNA(Arg) + L-arginine + ATP = L-arginyl-tRNA(Arg) + AMP + diphosphate. The polypeptide is Arginine--tRNA ligase (Chromohalobacter salexigens (strain ATCC BAA-138 / DSM 3043 / CIP 106854 / NCIMB 13768 / 1H11)).